A 62-amino-acid polypeptide reads, in one-letter code: 6.7 kDa chloroplast outer envelope membrane protein (62 aa).

The Chloroplast intermembrane segment spans residues 1–17 (MESVAKPATTKEGSAKQ). A helical membrane pass occupies residues 18 to 40 (AAIVVGVLALGWFAIQVAFIPLF). The Cytoplasmic segment spans residues 41–62 (NKVRGGGSDKKDDDVNAFTPDT).

Its subcellular location is the plastid. The protein resides in the chloroplast outer membrane. This chain is 6.7 kDa chloroplast outer envelope membrane protein, found in Spinacia oleracea (Spinach).